We begin with the raw amino-acid sequence, 567 residues long: uncharacterized protein (567 aa).

Transmembrane regions (helical) follow at residues 20–40 (FTIL…SGVL), 69–89 (SLET…SVFI), 95–115 (AYLT…VALI), 126–146 (ILLN…FMCL), 168–188 (IPLV…YLLF), and 528–548 (IFGS…LLAI).

It localises to the cell membrane. This is an uncharacterized protein from Escherichia coli (strain K12).